A 388-amino-acid chain; its full sequence is Isocitrate dehydrogenase [NAD] subunit 1, mitochondrial (388 aa).

The transit peptide at 1–35 directs the protein to the mitochondrion; it reads MFSLRTAQPAQSLFRAATNTYSTSLPRSAIAARSF. Residues Arg137, Arg168, and Asp255 each contribute to the substrate site. Asp255 contributes to the Mg(2+) binding site.

Belongs to the isocitrate and isopropylmalate dehydrogenases family. As to quaternary structure, octamer of two non-identical subunits IDH1 and IDH2. Mg(2+) serves as cofactor. It depends on Mn(2+) as a cofactor.

Its subcellular location is the mitochondrion. The enzyme catalyses D-threo-isocitrate + NAD(+) = 2-oxoglutarate + CO2 + NADH. Its function is as follows. Performs an essential role in the oxidative function of the citric acid cycle. The protein is Isocitrate dehydrogenase [NAD] subunit 1, mitochondrial (IDH1) of Ajellomyces capsulatus (Darling's disease fungus).